Here is a 65-residue protein sequence, read N- to C-terminus: UPF0434 protein IL1511 (65 aa).

It belongs to the UPF0434 family.

In Idiomarina loihiensis (strain ATCC BAA-735 / DSM 15497 / L2-TR), this protein is UPF0434 protein IL1511.